The primary structure comprises 360 residues: Chorismate synthase (360 aa).

NADP(+) contacts are provided by Arg-48 and Arg-54. Residues 125–127 (RSS), 246–247 (NA), Gly-286, 301–305 (KPTSS), and Arg-327 each bind FMN.

This sequence belongs to the chorismate synthase family. Homotetramer. The cofactor is FMNH2.

The enzyme catalyses 5-O-(1-carboxyvinyl)-3-phosphoshikimate = chorismate + phosphate. It functions in the pathway metabolic intermediate biosynthesis; chorismate biosynthesis; chorismate from D-erythrose 4-phosphate and phosphoenolpyruvate: step 7/7. Functionally, catalyzes the anti-1,4-elimination of the C-3 phosphate and the C-6 proR hydrogen from 5-enolpyruvylshikimate-3-phosphate (EPSP) to yield chorismate, which is the branch point compound that serves as the starting substrate for the three terminal pathways of aromatic amino acid biosynthesis. This reaction introduces a second double bond into the aromatic ring system. The sequence is that of Chorismate synthase from Actinobacillus pleuropneumoniae serotype 7 (strain AP76).